The sequence spans 175 residues: Ribosome maturation factor RimM (175 aa).

Residues 99-172 (EGEFHLLDLV…WLRLTPPPGL (74 aa)) enclose the PRC barrel domain.

It belongs to the RimM family. In terms of assembly, binds ribosomal protein uS19.

Its subcellular location is the cytoplasm. In terms of biological role, an accessory protein needed during the final step in the assembly of 30S ribosomal subunit, possibly for assembly of the head region. Essential for efficient processing of 16S rRNA. May be needed both before and after RbfA during the maturation of 16S rRNA. It has affinity for free ribosomal 30S subunits but not for 70S ribosomes. This Synechococcus sp. (strain WH7803) protein is Ribosome maturation factor RimM.